The sequence spans 695 residues: Scarecrow-like protein 31 (695 aa).

Disordered regions lie at residues Val105 to Asn136 and Ile234 to Gln260. A compositionally biased stretch (low complexity) spans Ser113–Asn136. The stretch at Ala233–Glu266 forms a coiled coil. Residues Ala306 to Val693 enclose the GRAS domain. A leucine repeat I (LRI) region spans residues Val313–Ser377. The VHIID stretch occupies residues Tyr396 to Gly461. A VHIID motif is present at residues Leu427 to Asp431. Residues Asp477 to Glu509 form a leucine repeat II (LRII) region. Residues Leu519–Asn614 are PFYRE. The tract at residues Ala617–Val693 is SAW.

The protein belongs to the GRAS family. As to expression, expressed in seedlings, roots, cotyledons, leaves and sepals.

Its subcellular location is the nucleus. Its function is as follows. Probable transcription factor involved in plant development. This Arabidopsis thaliana (Mouse-ear cress) protein is Scarecrow-like protein 31 (SCL31).